A 142-amino-acid chain; its full sequence is Hemoglobin subunit beta-1 (142 aa).

Residues 2-142 (SLTDEEIRLI…VTEALSCQYH (141 aa)) enclose the Globin domain. Heme b is bound by residues His59 and His88.

The protein belongs to the globin family. Heterotetramer of two alpha chains and two beta chains. Red blood cells.

Its function is as follows. Involved in oxygen transport from the lung to the various peripheral tissues. In Torpedo marmorata (Marbled electric ray), this protein is Hemoglobin subunit beta-1 (HBB1).